Consider the following 240-residue polypeptide: Uridylate kinase (240 aa).

Residue 9–12 coordinates ATP; the sequence is KLSG. Gly-51 is a UMP binding site. Positions 52 and 56 each coordinate ATP. UMP-binding positions include Asp-71 and 132–139; that span reads TGNPFFTT. ATP is bound by residues Thr-159, Tyr-165, and Asp-168.

The protein belongs to the UMP kinase family. In terms of assembly, homohexamer.

The protein localises to the cytoplasm. It carries out the reaction UMP + ATP = UDP + ADP. The protein operates within pyrimidine metabolism; CTP biosynthesis via de novo pathway; UDP from UMP (UMPK route): step 1/1. Inhibited by UTP. Its function is as follows. Catalyzes the reversible phosphorylation of UMP to UDP. The polypeptide is Uridylate kinase (Synechococcus elongatus (strain ATCC 33912 / PCC 7942 / FACHB-805) (Anacystis nidulans R2)).